A 557-amino-acid chain; its full sequence is Cytochrome P450 734A2 (557 aa).

Residues 13-35 (WATWRVAAVAAAAAVWVTMHVAA) form a helical membrane-spanning segment. Residue Cys495 participates in heme binding.

The protein belongs to the cytochrome P450 family. Requires heme as cofactor. As to expression, expressed in roots, shoot apex, leaf sheaths and leaf blades.

It is found in the membrane. Functionally, cytochrome P450 involved in brassinosteroids (BRs) inactivation and regulation of BRs homeostasis. Is a multifunctional and multisubstrate enzyme that controls the endogenous bioactive BR content both by direct inactivation of castasterone (CS) and by decreasing the levels of BR precursors. Catalyzes the oxidation of carbon 22 hydroxylated BR intermediates to produce C26 oxidized metabolites. This is Cytochrome P450 734A2 (CYP734A2) from Oryza sativa subsp. japonica (Rice).